A 407-amino-acid polypeptide reads, in one-letter code: Na(+)-translocating NADH-quinone reductase subunit F (407 aa).

A helical transmembrane segment spans residues 6 to 26; the sequence is IFLAIGMFTAIVLGLVAIILV. A 2Fe-2S ferredoxin-type domain is found at 35-127; that stretch reads GDVTIQINGE…DMQIRVPEEV (93 aa). The [2Fe-2S] cluster site is built by C70, C76, C79, and C111. An FAD-binding FR-type domain is found at 130–269; the sequence is VKKWECTVES…YGPFGEFFAK (140 aa).

This sequence belongs to the NqrF family. Composed of six subunits; NqrA, NqrB, NqrC, NqrD, NqrE and NqrF. Requires [2Fe-2S] cluster as cofactor. It depends on FAD as a cofactor.

Its subcellular location is the cell inner membrane. The enzyme catalyses a ubiquinone + n Na(+)(in) + NADH + H(+) = a ubiquinol + n Na(+)(out) + NAD(+). Its function is as follows. NQR complex catalyzes the reduction of ubiquinone-1 to ubiquinol by two successive reactions, coupled with the transport of Na(+) ions from the cytoplasm to the periplasm. The first step is catalyzed by NqrF, which accepts electrons from NADH and reduces ubiquinone-1 to ubisemiquinone by a one-electron transfer pathway. This Pseudomonas paraeruginosa (strain DSM 24068 / PA7) (Pseudomonas aeruginosa (strain PA7)) protein is Na(+)-translocating NADH-quinone reductase subunit F.